The primary structure comprises 254 residues: 3-deoxy-manno-octulosonate cytidylyltransferase (254 aa).

It belongs to the KdsB family.

It localises to the cytoplasm. It carries out the reaction 3-deoxy-alpha-D-manno-oct-2-ulosonate + CTP = CMP-3-deoxy-beta-D-manno-octulosonate + diphosphate. It functions in the pathway nucleotide-sugar biosynthesis; CMP-3-deoxy-D-manno-octulosonate biosynthesis; CMP-3-deoxy-D-manno-octulosonate from 3-deoxy-D-manno-octulosonate and CTP: step 1/1. Its pathway is bacterial outer membrane biogenesis; lipopolysaccharide biosynthesis. In terms of biological role, activates KDO (a required 8-carbon sugar) for incorporation into bacterial lipopolysaccharide in Gram-negative bacteria. The polypeptide is 3-deoxy-manno-octulosonate cytidylyltransferase (Polynucleobacter necessarius subsp. necessarius (strain STIR1)).